The chain runs to 85 residues: Sodium channel neurotoxin MeuNaTxalpha-1 (85 aa).

The N-terminal stretch at 1 to 19 is a signal peptide; it reads MNSLVMISLALLVMTGVES. Positions 21–83 constitute an LCN-type CS-alpha/beta domain; that stretch reads RDGYIADDKN…VPIKVSGKCN (63 aa). The tract at residues 27-31 is specificity module, loop 1; that stretch reads DDKNC. Cystine bridges form between C31/C82, C35/C55, C41/C65, and C45/C67. Specificity module, loop stretches follow at residues 58 to 62 and 75 to 83; these read AGQYG and PIKVSGKCN. N83 carries the post-translational modification Asparagine amide.

Belongs to the long (4 C-C) scorpion toxin superfamily. Sodium channel inhibitor family. Alpha subfamily. Post-translationally, C-terminal amidation does not appear to play an important role in activity, since the non-amidated recombinant toxin and the native toxin (which is amidated) show similar activities on all sodium channels tested. Expressed by the venom gland.

It is found in the secreted. Functionally, alpha toxins bind voltage-independently at site-3 of sodium channels (Nav) and inhibit the inactivation of the activated channels, thereby blocking neuronal transmission. This toxin inhibits inactivation of Nav1.6/SCN8A (EC(50)=3.1 uM) and drosophila DmNav1 (EC(50)=1.17 uM). It also shows a weak inhibition of inactivation on Nav1.2/SCN2A Nav1.3/SCN3A, and Nav1.7/SCN9A. The toxin (1 uM) does not significantly shift the midpoint of activation at the two channels, but induces a significant depolarizing shift in the V(1/2) of inactivation of the channels. The toxin has also been shown to dose-dependently stimulates intracellular signaling in DRG neurons through activation of two kinases (type II protein kinase A (PKA-II) and MAP kinases 1/3 (MAPK1/MAPK3)). Nav1.2/SCN2A is strongly suggested to be the target channel predominantly involved in this activation. In vivo, the toxin induces a dose-dependent thermal hyperalgesia lasting 30-45 minutes. The sequence is that of Sodium channel neurotoxin MeuNaTxalpha-1 from Mesobuthus eupeus (Lesser Asian scorpion).